A 229-amino-acid chain; its full sequence is Protein FAM3C (229 aa).

The N-terminal stretch at 1–24 (MRIAGAIKFVVAVALFLLTFYVIS) is a signal peptide. 2 disulfides stabilise this stretch: C59/C87 and C65/C222. Positions 68 to 226 (KHFAFKIASG…VEMEGCIPQK (159 aa)) constitute a GG-type lectin domain.

This sequence belongs to the FAM3 family. As to expression, expressed in the retinal ganglion cell layer.

Its subcellular location is the secreted. Its function is as follows. Involved in retinal laminar formation. This Xenopus laevis (African clawed frog) protein is Protein FAM3C (fam3c).